The following is an 82-amino-acid chain: Small ribosomal subunit protein bS16 (82 aa).

Belongs to the bacterial ribosomal protein bS16 family.

The chain is Small ribosomal subunit protein bS16 from Shewanella sp. (strain ANA-3).